Consider the following 248-residue polypeptide: Probable transcriptional regulatory protein Ccel_0181 (248 aa).

This sequence belongs to the TACO1 family.

Its subcellular location is the cytoplasm. The protein is Probable transcriptional regulatory protein Ccel_0181 of Ruminiclostridium cellulolyticum (strain ATCC 35319 / DSM 5812 / JCM 6584 / H10) (Clostridium cellulolyticum).